The chain runs to 72 residues: DNA gyrase inhibitor YacG (72 aa).

Positions 14, 17, 33, and 37 each coordinate Zn(2+).

Belongs to the DNA gyrase inhibitor YacG family. As to quaternary structure, interacts with GyrB. Requires Zn(2+) as cofactor.

In terms of biological role, inhibits all the catalytic activities of DNA gyrase by preventing its interaction with DNA. Acts by binding directly to the C-terminal domain of GyrB, which probably disrupts DNA binding by the gyrase. The polypeptide is DNA gyrase inhibitor YacG (Mannheimia succiniciproducens (strain KCTC 0769BP / MBEL55E)).